The sequence spans 943 residues: Isoleucine--tRNA ligase (943 aa).

Residues 58–68 (PYANGSIHIGH) carry the 'HIGH' region motif. E567 lines the L-isoleucyl-5'-AMP pocket. Residues 608–612 (KMSKS) carry the 'KMSKS' region motif. K611 serves as a coordination point for ATP. C906, C909, C926, and C929 together coordinate Zn(2+).

This sequence belongs to the class-I aminoacyl-tRNA synthetase family. IleS type 1 subfamily. In terms of assembly, monomer. Requires Zn(2+) as cofactor.

It localises to the cytoplasm. The catalysed reaction is tRNA(Ile) + L-isoleucine + ATP = L-isoleucyl-tRNA(Ile) + AMP + diphosphate. Catalyzes the attachment of isoleucine to tRNA(Ile). As IleRS can inadvertently accommodate and process structurally similar amino acids such as valine, to avoid such errors it has two additional distinct tRNA(Ile)-dependent editing activities. One activity is designated as 'pretransfer' editing and involves the hydrolysis of activated Val-AMP. The other activity is designated 'posttransfer' editing and involves deacylation of mischarged Val-tRNA(Ile). The polypeptide is Isoleucine--tRNA ligase (Pseudomonas paraeruginosa (strain DSM 24068 / PA7) (Pseudomonas aeruginosa (strain PA7))).